The following is a 258-amino-acid chain: uncharacterized protein (258 aa).

Residues 1–20 (MKCFQKLYIFILILIVLMAG) form the signal peptide. A lipid anchor (N-palmitoyl cysteine) is attached at Cys-21. Cys-21 carries the S-diacylglycerol cysteine lipid modification.

It belongs to the staphylococcal tandem lipoprotein family.

The protein resides in the cell membrane. This is an uncharacterized protein from Staphylococcus aureus (strain bovine RF122 / ET3-1).